We begin with the raw amino-acid sequence, 541 residues long: Chaperonin GroEL 2 (541 aa).

Residues T29–P32, D86–T90, G413, N476–A478, and D492 each bind ATP.

Belongs to the chaperonin (HSP60) family. In terms of assembly, forms a cylinder of 14 subunits composed of two heptameric rings stacked back-to-back. Interacts with the co-chaperonin GroES.

The protein resides in the cytoplasm. It carries out the reaction ATP + H2O + a folded polypeptide = ADP + phosphate + an unfolded polypeptide.. In terms of biological role, together with its co-chaperonin GroES, plays an essential role in assisting protein folding. The GroEL-GroES system forms a nano-cage that allows encapsulation of the non-native substrate proteins and provides a physical environment optimized to promote and accelerate protein folding. This chain is Chaperonin GroEL 2, found in Streptomyces avermitilis (strain ATCC 31267 / DSM 46492 / JCM 5070 / NBRC 14893 / NCIMB 12804 / NRRL 8165 / MA-4680).